We begin with the raw amino-acid sequence, 308 residues long: Aspartate carbamoyltransferase catalytic subunit (308 aa).

Carbamoyl phosphate is bound by residues Arg-50 and Thr-51. L-aspartate is bound at residue Lys-78. 3 residues coordinate carbamoyl phosphate: Arg-100, His-131, and Gln-134. 2 residues coordinate L-aspartate: Arg-164 and Arg-216. Carbamoyl phosphate-binding residues include Ala-259 and Pro-260.

Belongs to the aspartate/ornithine carbamoyltransferase superfamily. ATCase family. As to quaternary structure, heterododecamer (2C3:3R2) of six catalytic PyrB chains organized as two trimers (C3), and six regulatory PyrI chains organized as three dimers (R2).

It catalyses the reaction carbamoyl phosphate + L-aspartate = N-carbamoyl-L-aspartate + phosphate + H(+). Its pathway is pyrimidine metabolism; UMP biosynthesis via de novo pathway; (S)-dihydroorotate from bicarbonate: step 2/3. Functionally, catalyzes the condensation of carbamoyl phosphate and aspartate to form carbamoyl aspartate and inorganic phosphate, the committed step in the de novo pyrimidine nucleotide biosynthesis pathway. In Oenococcus oeni (strain ATCC BAA-331 / PSU-1), this protein is Aspartate carbamoyltransferase catalytic subunit.